The sequence spans 298 residues: UDP-N-acetylenolpyruvoylglucosamine reductase (298 aa).

Residues 26–191 form the FAD-binding PCMH-type domain; sequence KTGGPADWLA…LDATFALEPG (166 aa). Arginine 170 is a catalytic residue. Serine 220 functions as the Proton donor in the catalytic mechanism. The active site involves glutamate 290.

This sequence belongs to the MurB family. The cofactor is FAD.

The protein resides in the cytoplasm. It catalyses the reaction UDP-N-acetyl-alpha-D-muramate + NADP(+) = UDP-N-acetyl-3-O-(1-carboxyvinyl)-alpha-D-glucosamine + NADPH + H(+). It participates in cell wall biogenesis; peptidoglycan biosynthesis. Its function is as follows. Cell wall formation. This is UDP-N-acetylenolpyruvoylglucosamine reductase from Limosilactobacillus reuteri subsp. reuteri (strain JCM 1112) (Lactobacillus reuteri).